A 727-amino-acid polypeptide reads, in one-letter code: Fatty acid oxidation complex subunit alpha (727 aa).

Residues 16–205 (NQTASVFSFD…RLGLVDDAVP (190 aa)) form an enoyl-CoA hydratase region. The 3-hydroxyacyl-CoA dehydrogenase stretch occupies residues 321–727 (AKIKHVGILG…MAEQNKSFYP (407 aa)).

This sequence in the N-terminal section; belongs to the enoyl-CoA hydratase/isomerase family. The protein in the central section; belongs to the 3-hydroxyacyl-CoA dehydrogenase family. As to quaternary structure, heterotetramer of two alpha chains (FadJ) and two beta chains (FadI).

It localises to the cytoplasm. The enzyme catalyses a (3S)-3-hydroxyacyl-CoA = a (2E)-enoyl-CoA + H2O. It catalyses the reaction a 4-saturated-(3S)-3-hydroxyacyl-CoA = a (3E)-enoyl-CoA + H2O. The catalysed reaction is a (3S)-3-hydroxyacyl-CoA + NAD(+) = a 3-oxoacyl-CoA + NADH + H(+). It carries out the reaction (3S)-3-hydroxybutanoyl-CoA = (3R)-3-hydroxybutanoyl-CoA. It participates in lipid metabolism; fatty acid beta-oxidation. Functionally, catalyzes the formation of a hydroxyacyl-CoA by addition of water on enoyl-CoA. Also exhibits 3-hydroxyacyl-CoA epimerase and 3-hydroxyacyl-CoA dehydrogenase activities. The sequence is that of Fatty acid oxidation complex subunit alpha from Photorhabdus laumondii subsp. laumondii (strain DSM 15139 / CIP 105565 / TT01) (Photorhabdus luminescens subsp. laumondii).